Here is a 361-residue protein sequence, read N- to C-terminus: DNA replication and repair protein RecF (361 aa).

30-37 (GPNGSGKT) is an ATP binding site.

This sequence belongs to the RecF family.

Its subcellular location is the cytoplasm. Its function is as follows. The RecF protein is involved in DNA metabolism; it is required for DNA replication and normal SOS inducibility. RecF binds preferentially to single-stranded, linear DNA. It also seems to bind ATP. This Yersinia pseudotuberculosis serotype O:1b (strain IP 31758) protein is DNA replication and repair protein RecF.